Here is a 313-residue protein sequence, read N- to C-terminus: MASPSNDSTAPVSEFLLICFPNFQSWQHWLSLPLSLLFLLAMGANTTLLITIQLEASLHQPLYYLLSLLSLLDIVLCLTVIPKVLAIFWFDLRSISFPACFLQMFIMNSFLTMESCTFMVMAYDRYVAICHPLRYPSIITDQFVARAVVFVIARNAFVSLPVPMLSARLRYCAGNIIKNCICSNLSVSKLSCDDITFNQLYQFVAGWTLLGSDLILIVISYSFILKVVLRIKAEGAVAKALSTCGSHFILILFFSTVLLVLVITNLARKRIPPDVPILLNILHHLIPPALNPIVYGVRTKEIKQGIQNLLKRL.

Residues 1–28 (MASPSNDSTAPVSEFLLICFPNFQSWQH) lie on the Extracellular side of the membrane. N-linked (GlcNAc...) asparagine glycosylation occurs at Asn6. A helical membrane pass occupies residues 29 to 49 (WLSLPLSLLFLLAMGANTTLL). At 50–57 (ITIQLEAS) the chain is on the cytoplasmic side. Residues 58-78 (LHQPLYYLLSLLSLLDIVLCL) traverse the membrane as a helical segment. Residues 79–102 (TVIPKVLAIFWFDLRSISFPACFL) are Extracellular-facing. Residues Cys100 and Cys192 are joined by a disulfide bond. A helical transmembrane segment spans residues 103–123 (QMFIMNSFLTMESCTFMVMAY). Residues 124 to 142 (DRYVAICHPLRYPSIITDQ) are Cytoplasmic-facing. The chain crosses the membrane as a helical span at residues 143 to 163 (FVARAVVFVIARNAFVSLPVP). Residues 164 to 199 (MLSARLRYCAGNIIKNCICSNLSVSKLSCDDITFNQ) are Extracellular-facing. A glycan (N-linked (GlcNAc...) asparagine) is linked at Asn184. Residues 200–220 (LYQFVAGWTLLGSDLILIVIS) form a helical membrane-spanning segment. Residues 221–240 (YSFILKVVLRIKAEGAVAKA) lie on the Cytoplasmic side of the membrane. A helical membrane pass occupies residues 241–261 (LSTCGSHFILILFFSTVLLVL). Over 262-276 (VITNLARKRIPPDVP) the chain is Extracellular. Residues 277 to 297 (ILLNILHHLIPPALNPIVYGV) traverse the membrane as a helical segment. Topologically, residues 298–313 (RTKEIKQGIQNLLKRL) are cytoplasmic.

This sequence belongs to the G-protein coupled receptor 1 family.

The protein localises to the cell membrane. In terms of biological role, odorant receptor. This chain is Olfactory receptor 56A4 (OR56A4), found in Homo sapiens (Human).